The chain runs to 367 residues: tRNA-specific 2-thiouridylase MnmA (367 aa).

Residues 9–16 (LMSGGVDS) and phenylalanine 35 contribute to the ATP site. Cysteine 107 acts as the Nucleophile in catalysis. Residues cysteine 107 and cysteine 205 are joined by a disulfide bond. Residue glycine 131 coordinates ATP. Residues 155 to 157 (KDQ) are interaction with tRNA. Cysteine 205 acts as the Cysteine persulfide intermediate in catalysis.

This sequence belongs to the MnmA/TRMU family.

The protein resides in the cytoplasm. It catalyses the reaction S-sulfanyl-L-cysteinyl-[protein] + uridine(34) in tRNA + AH2 + ATP = 2-thiouridine(34) in tRNA + L-cysteinyl-[protein] + A + AMP + diphosphate + H(+). Catalyzes the 2-thiolation of uridine at the wobble position (U34) of tRNA, leading to the formation of s(2)U34. The chain is tRNA-specific 2-thiouridylase MnmA from Petrotoga mobilis (strain DSM 10674 / SJ95).